A 119-amino-acid chain; its full sequence is Non-structural protein 3b (119 aa).

The DRBM domain occupies 2 to 83 (DYVSLLNQFW…ARLICEQLQA (82 aa)).

In terms of assembly, interacts with host RUNX1 isoform b.

The protein resides in the host nucleus. The protein localises to the host nucleolus. Its subcellular location is the host mitochondrion. Its function is as follows. Induces host cell G0/G1 arrest and apoptosis. This chain is Non-structural protein 3b, found in Tylonycteris pachypus (Lesser bamboo bat).